Reading from the N-terminus, the 305-residue chain is NADH-cytochrome b5 reductase 1 (305 aa).

The chain crosses the membrane as a helical span at residues 8-28 (VLLASLGVGLVTLLGLAVGSY). Positions 44–156 (NEKYLLRLLD…RGPSGLLTYT (113 aa)) constitute an FAD-binding FR-type domain. FAD-binding positions include 136 to 166 (DSLK…IQPN) and 175 to 210 (VAKK…QCFL).

It belongs to the flavoprotein pyridine nucleotide cytochrome reductase family. It depends on FAD as a cofactor. In terms of tissue distribution, widely expressed.

The protein localises to the membrane. It catalyses the reaction 2 Fe(III)-[cytochrome b5] + NADH = 2 Fe(II)-[cytochrome b5] + NAD(+) + H(+). Its function is as follows. NADH-cytochrome b5 reductases are involved in desaturation and elongation of fatty acids, cholesterol biosynthesis, drug metabolism, and, in erythrocyte, methemoglobin reduction. The sequence is that of NADH-cytochrome b5 reductase 1 (CYB5R1) from Homo sapiens (Human).